Reading from the N-terminus, the 264-residue chain is Thymidylate synthase (264 aa).

R21 contributes to the dUMP binding site. (6R)-5,10-methylene-5,6,7,8-tetrahydrofolate is bound at residue H51. 126–127 (RR) serves as a coordination point for dUMP. The Nucleophile role is filled by C146. DUMP is bound by residues 166 to 169 (RSAD), N177, and 207 to 209 (HLY). D169 lines the (6R)-5,10-methylene-5,6,7,8-tetrahydrofolate pocket. A263 lines the (6R)-5,10-methylene-5,6,7,8-tetrahydrofolate pocket.

This sequence belongs to the thymidylate synthase family. Bacterial-type ThyA subfamily. In terms of assembly, homodimer.

Its subcellular location is the cytoplasm. It carries out the reaction dUMP + (6R)-5,10-methylene-5,6,7,8-tetrahydrofolate = 7,8-dihydrofolate + dTMP. It participates in pyrimidine metabolism; dTTP biosynthesis. Its function is as follows. Catalyzes the reductive methylation of 2'-deoxyuridine-5'-monophosphate (dUMP) to 2'-deoxythymidine-5'-monophosphate (dTMP) while utilizing 5,10-methylenetetrahydrofolate (mTHF) as the methyl donor and reductant in the reaction, yielding dihydrofolate (DHF) as a by-product. This enzymatic reaction provides an intracellular de novo source of dTMP, an essential precursor for DNA biosynthesis. In Ralstonia nicotianae (strain ATCC BAA-1114 / GMI1000) (Ralstonia solanacearum), this protein is Thymidylate synthase.